We begin with the raw amino-acid sequence, 307 residues long: MAKPRKRGRDIDGVFLLDKPQGMSSNDIMQKVKRVFQANKAGHTGALDPLATGMLPICLGEATKFSQFLLDADKRYQVTAKLGERTDTSDAEGQVVETRDVQVDVQDILAALPHFRGNLMQVPTMFSALKHQGKPLYEYARAGITVEREARPITIFDLQFIAYDAPYLTLEVHCSKGTYIRTLVDDLGEYLGCGAHVTVLRRTAVANYPVEAMMNWDTLQVLAAQQDLALLDQHLLPTDSAVSALPALHLNQEQSKAISFGQRVKFDNPTQLTGQVRLFSDTQQFLGVALVDEHNVIRPQRLMTQNT.

Residue Asp48 is the Nucleophile of the active site.

The protein belongs to the pseudouridine synthase TruB family. Type 1 subfamily.

It catalyses the reaction uridine(55) in tRNA = pseudouridine(55) in tRNA. Its function is as follows. Responsible for synthesis of pseudouridine from uracil-55 in the psi GC loop of transfer RNAs. The protein is tRNA pseudouridine synthase B of Pasteurella multocida (strain Pm70).